Here is a 469-residue protein sequence, read N- to C-terminus: Siroheme synthase (469 aa).

Residues 1-211 (MSTQLQTWDF…GRTDKARAML (211 aa)) are precorrin-2 dehydrogenase /sirohydrochlorin ferrochelatase. NAD(+) is bound by residues 29–30 (EQ) and 50–51 (DP). Ser-136 bears the Phosphoserine mark. The interval 227-469 (GEVYLVGAGP…TLRDRLRWMD (243 aa)) is uroporphyrinogen-III C-methyltransferase. Pro-236 is a binding site for S-adenosyl-L-methionine. The Proton acceptor role is filled by Asp-259. Lys-281 functions as the Proton donor in the catalytic mechanism. S-adenosyl-L-methionine contacts are provided by residues 312-314 (GGD), Ile-317, 342-343 (TA), Met-394, and Gly-423.

In the N-terminal section; belongs to the precorrin-2 dehydrogenase / sirohydrochlorin ferrochelatase family. It in the C-terminal section; belongs to the precorrin methyltransferase family.

The enzyme catalyses uroporphyrinogen III + 2 S-adenosyl-L-methionine = precorrin-2 + 2 S-adenosyl-L-homocysteine + H(+). It carries out the reaction precorrin-2 + NAD(+) = sirohydrochlorin + NADH + 2 H(+). The catalysed reaction is siroheme + 2 H(+) = sirohydrochlorin + Fe(2+). Its pathway is cofactor biosynthesis; adenosylcobalamin biosynthesis; precorrin-2 from uroporphyrinogen III: step 1/1. The protein operates within cofactor biosynthesis; adenosylcobalamin biosynthesis; sirohydrochlorin from precorrin-2: step 1/1. It functions in the pathway porphyrin-containing compound metabolism; siroheme biosynthesis; precorrin-2 from uroporphyrinogen III: step 1/1. It participates in porphyrin-containing compound metabolism; siroheme biosynthesis; siroheme from sirohydrochlorin: step 1/1. Its pathway is porphyrin-containing compound metabolism; siroheme biosynthesis; sirohydrochlorin from precorrin-2: step 1/1. In terms of biological role, multifunctional enzyme that catalyzes the SAM-dependent methylations of uroporphyrinogen III at position C-2 and C-7 to form precorrin-2 via precorrin-1. Then it catalyzes the NAD-dependent ring dehydrogenation of precorrin-2 to yield sirohydrochlorin. Finally, it catalyzes the ferrochelation of sirohydrochlorin to yield siroheme. This chain is Siroheme synthase, found in Hahella chejuensis (strain KCTC 2396).